Here is a 157-residue protein sequence, read N- to C-terminus: Tripartite terminase subunit 2 (157 aa).

The tract at residues 1–69 is disordered; that stretch reads MSWAKQRVPF…DGEDGHALPD (69 aa). The span at 11-27 shows a compositional bias: acidic residues; the sequence is LDDDDGEEENDVQDDVD.

This sequence belongs to the herpesviridae TRM2 protein family. As to quaternary structure, associates with TRM1 and TRM3 to form the tripartite terminase complex.

The protein resides in the host nucleus. Its function is as follows. Component of the molecular motor that translocates viral genomic DNA in empty capsid during DNA packaging. Forms a tripartite terminase complex together with TRM1 and TRM3 in the host cytoplasm. Once the complex reaches the host nucleus, it interacts with the capsid portal vertex. This portal forms a ring in which genomic DNA is translocated into the capsid. This Homo sapiens (Human) protein is Tripartite terminase subunit 2.